We begin with the raw amino-acid sequence, 85 residues long: Small protein YqaH (85 aa).

Interacts with domain IV of DnaA and with Spo0A.

Its function is as follows. Binds to and counteracts DnaA replication initiation activity; overexpression decreases the number of replication initiation events. Also antagonizes DnaA's transcriptional regulation activity. Ectopic expression during exponential phase stops cell growth 2 hours after induction, leading to filamentation, aberrant chromosome segregation and septoid-trapped nucleoids. Overexpression during sporulation onset leads to dramatic reductions in spore formation. The chain is Small protein YqaH (yqaH) from Bacillus subtilis (strain 168).